The following is a 259-amino-acid chain: MMQKQNMIVVNQKEIAKNIYELVLQGTLVQQMNEPGQFVHIKVAEGIAPLLRRPISICNVDQEKNEFTMLYRAEGQGTKTLATRKQGEMVDVLGPLGHGFPVEEAEAGQTALLVGGGIGVPPLYELSQRLVAKGVRVIHILGFQTKDVVFYEEKFAELGDAYVATVDGTHGTKGFVTDVIDHYGIDFDILYSCGPLAMLRALEGRYKEKKAYISLEERMGCGIGACFACVCHLQEDPSGHSYKKVCSDGPVFPIGEVVL.

Residues 2–102 (MQKQNMIVVN…LGPLGHGFPV (101 aa)) form the FAD-binding FR-type domain. FAD contacts are provided by residues 53-56 (RPIS), 70-72 (LYR), and 77-78 (GT). 4 residues coordinate [2Fe-2S] cluster: C221, C226, C229, and C246.

This sequence belongs to the PyrK family. In terms of assembly, heterotetramer of 2 PyrK and 2 PyrD type B subunits. Requires [2Fe-2S] cluster as cofactor. It depends on FAD as a cofactor.

It functions in the pathway pyrimidine metabolism; UMP biosynthesis via de novo pathway; orotate from (S)-dihydroorotate (NAD(+) route): step 1/1. Responsible for channeling the electrons from the oxidation of dihydroorotate from the FMN redox center in the PyrD type B subunit to the ultimate electron acceptor NAD(+). The polypeptide is Dihydroorotate dehydrogenase B (NAD(+)), electron transfer subunit (Bacillus cereus (strain 03BB102)).